We begin with the raw amino-acid sequence, 378 residues long: MAIISSRDTGQNAEGPKRRQQKSSAWRKEGRELSFAGERGADPSALLQPQAHPGEAQEESLRPRTLAEYIGQTELKEVLSIAIAAARARQEPLDHLLFYGPPGLGKTTVAAVLAAEMGSQFYMTTAPALESPRDIAGYLVRLKRGDVLFIDEIHRLPKVTEELLYPAMEDFRLDITIGKGRSARITSLPLERFTLIGATTRIGALTSPLRDRFGHVQRLRFYEPHELVQIVLRTARLLNVSTDPEGAAEIARRSRGTPRIANRLFKRVRDYAQVRGDGHISQEVAAAALELFQVDPMGLDWIDRKLLTVLVEQFGGGPVGLETMAAVTGEDPQTIEEVYEPYLLQIGYLQRTPRGRVVTPAALRHLGYEAQSPLPLWS.

Polar residues predominate over residues methionine 1–asparagine 12. Residues methionine 1–arginine 62 form a disordered region. The large ATPase domain (RuvB-L) stretch occupies residues alanine 13–tyrosine 222. Residues leucine 61, arginine 62, glycine 103, lysine 106, threonine 107, threonine 108, glutamate 169–phenylalanine 171, arginine 212, tyrosine 222, and arginine 259 contribute to the ATP site. Threonine 107 is a binding site for Mg(2+). A small ATPAse domain (RuvB-S) region spans residues glutamate 223–glutamine 293. The head domain (RuvB-H) stretch occupies residues proline 296–serine 378. DNA is bound by residues arginine 351 and arginine 356.

This sequence belongs to the RuvB family. Homohexamer. Forms an RuvA(8)-RuvB(12)-Holliday junction (HJ) complex. HJ DNA is sandwiched between 2 RuvA tetramers; dsDNA enters through RuvA and exits via RuvB. An RuvB hexamer assembles on each DNA strand where it exits the tetramer. Each RuvB hexamer is contacted by two RuvA subunits (via domain III) on 2 adjacent RuvB subunits; this complex drives branch migration. In the full resolvosome a probable DNA-RuvA(4)-RuvB(12)-RuvC(2) complex forms which resolves the HJ.

It is found in the cytoplasm. The catalysed reaction is ATP + H2O = ADP + phosphate + H(+). Its function is as follows. The RuvA-RuvB-RuvC complex processes Holliday junction (HJ) DNA during genetic recombination and DNA repair, while the RuvA-RuvB complex plays an important role in the rescue of blocked DNA replication forks via replication fork reversal (RFR). RuvA specifically binds to HJ cruciform DNA, conferring on it an open structure. The RuvB hexamer acts as an ATP-dependent pump, pulling dsDNA into and through the RuvAB complex. RuvB forms 2 homohexamers on either side of HJ DNA bound by 1 or 2 RuvA tetramers; 4 subunits per hexamer contact DNA at a time. Coordinated motions by a converter formed by DNA-disengaged RuvB subunits stimulates ATP hydrolysis and nucleotide exchange. Immobilization of the converter enables RuvB to convert the ATP-contained energy into a lever motion, pulling 2 nucleotides of DNA out of the RuvA tetramer per ATP hydrolyzed, thus driving DNA branch migration. The RuvB motors rotate together with the DNA substrate, which together with the progressing nucleotide cycle form the mechanistic basis for DNA recombination by continuous HJ branch migration. Branch migration allows RuvC to scan DNA until it finds its consensus sequence, where it cleaves and resolves cruciform DNA. The polypeptide is Holliday junction branch migration complex subunit RuvB 1 (Synechococcus sp. (strain JA-3-3Ab) (Cyanobacteria bacterium Yellowstone A-Prime)).